The sequence spans 1362 residues: ATP-dependent RNA helicase dhx29 (1362 aa).

A compositionally biased stretch (basic residues) spans 1 to 10 (MGGKNKKNRH). The interval 1-76 (MGGKNKKNRH…FASSSDSGVS (76 aa)) is disordered. Residues 18–27 (GATAAANRPR) are compositionally biased toward low complexity. Positions 28 to 41 (AAAEPRPGGEDAAK) are enriched in basic and acidic residues. Over residues 66-76 (SFASSSDSGVS) the composition is skewed to low complexity. A coiled-coil region spans residues 89 to 109 (EAKLEKRIISLINEHKKLNSN). 2 disordered regions span residues 182–215 (QRAR…LKGN) and 229–257 (EQGS…DPNE). Over residues 231-242 (GSDDDDDDDDVK) the composition is skewed to acidic residues. Positions 243-257 (EEEKETTLEKFDPNE) are enriched in basic and acidic residues. Residues 285–305 (QKEAQERIRGYQQEMKSLEDH) adopt a coiled-coil conformation. Residues 317-336 (VKSESKQPKPALPPSEDEPL) form a disordered region. One can recognise a Helicase ATP-binding domain in the interval 576 to 749 (LETLKRHRVI…FTHCPIIRIS (174 aa)). Residue 589–596 (GETGSGKS) coordinates ATP. Residues 696–699 (DEVH) carry the DEAH box motif. Residues 852–1021 (DISPEYRNVE…ELCLHIMKCD (170 aa)) enclose the Helicase C-terminal domain.

Belongs to the DEAD box helicase family. DEAH subfamily. Part of the 43S pre-initiation complex (PIC).

The protein resides in the cytoplasm. The enzyme catalyses ATP + H2O = ADP + phosphate + H(+). Its function is as follows. ATP-binding RNA helicase involved in translation initiation. Part of the 43S pre-initiation complex that is required for efficient initiation on mRNAs of higher eukaryotes with structured 5'-UTRs by promoting efficient NTPase-dependent 48S complex formation. Specifically binds to the 40S ribosome near the mRNA entrance. Does not possess a processive helicase activity. The chain is ATP-dependent RNA helicase dhx29 from Xenopus laevis (African clawed frog).